The following is a 218-amino-acid chain: Large ribosomal subunit protein uL3 (218 aa).

The disordered stretch occupies residues 121–163; it reads GYQKRHGFSRGPMTHGSKNHREPGSIGPGTTPGRIYPGKRMAG.

It belongs to the universal ribosomal protein uL3 family. In terms of assembly, part of the 50S ribosomal subunit. Forms a cluster with proteins L14 and L19.

Its function is as follows. One of the primary rRNA binding proteins, it binds directly near the 3'-end of the 23S rRNA, where it nucleates assembly of the 50S subunit. This Parasynechococcus marenigrum (strain WH8102) protein is Large ribosomal subunit protein uL3.